A 486-amino-acid polypeptide reads, in one-letter code: Protein nucleotidyltransferase YdiU (486 aa).

Positions 89, 91, 92, 112, 124, 125, 175, and 182 each coordinate ATP. Catalysis depends on Asp251, which acts as the Proton acceptor. Mg(2+) contacts are provided by Asn252 and Asp261. Asp261 is an ATP binding site.

It belongs to the SELO family. The cofactor is Mg(2+). Mn(2+) serves as cofactor.

The enzyme catalyses L-seryl-[protein] + ATP = 3-O-(5'-adenylyl)-L-seryl-[protein] + diphosphate. The catalysed reaction is L-threonyl-[protein] + ATP = 3-O-(5'-adenylyl)-L-threonyl-[protein] + diphosphate. It catalyses the reaction L-tyrosyl-[protein] + ATP = O-(5'-adenylyl)-L-tyrosyl-[protein] + diphosphate. It carries out the reaction L-histidyl-[protein] + UTP = N(tele)-(5'-uridylyl)-L-histidyl-[protein] + diphosphate. The enzyme catalyses L-seryl-[protein] + UTP = O-(5'-uridylyl)-L-seryl-[protein] + diphosphate. The catalysed reaction is L-tyrosyl-[protein] + UTP = O-(5'-uridylyl)-L-tyrosyl-[protein] + diphosphate. Functionally, nucleotidyltransferase involved in the post-translational modification of proteins. It can catalyze the addition of adenosine monophosphate (AMP) or uridine monophosphate (UMP) to a protein, resulting in modifications known as AMPylation and UMPylation. The protein is Protein nucleotidyltransferase YdiU of Shouchella clausii (strain KSM-K16) (Alkalihalobacillus clausii).